A 426-amino-acid chain; its full sequence is Glutamate-1-semialdehyde 2,1-aminomutase (426 aa).

Position 263 is an N6-(pyridoxal phosphate)lysine (Lys-263).

Belongs to the class-III pyridoxal-phosphate-dependent aminotransferase family. HemL subfamily. In terms of assembly, homodimer. Pyridoxal 5'-phosphate serves as cofactor.

It is found in the cytoplasm. It catalyses the reaction (S)-4-amino-5-oxopentanoate = 5-aminolevulinate. The protein operates within porphyrin-containing compound metabolism; protoporphyrin-IX biosynthesis; 5-aminolevulinate from L-glutamyl-tRNA(Glu): step 2/2. The polypeptide is Glutamate-1-semialdehyde 2,1-aminomutase (Caldicellulosiruptor bescii (strain ATCC BAA-1888 / DSM 6725 / KCTC 15123 / Z-1320) (Anaerocellum thermophilum)).